Reading from the N-terminus, the 197-residue chain is Xanthine phosphoribosyltransferase (197 aa).

Xanthine is bound by residues Leu20 and Asn27. 128–132 (ANGQA) lines the 5-phospho-alpha-D-ribose 1-diphosphate pocket. A xanthine-binding site is contributed by Lys156.

This sequence belongs to the purine/pyrimidine phosphoribosyltransferase family. Xpt subfamily. In terms of assembly, homodimer.

The protein localises to the cytoplasm. It catalyses the reaction XMP + diphosphate = xanthine + 5-phospho-alpha-D-ribose 1-diphosphate. The protein operates within purine metabolism; XMP biosynthesis via salvage pathway; XMP from xanthine: step 1/1. Its function is as follows. Converts the preformed base xanthine, a product of nucleic acid breakdown, to xanthosine 5'-monophosphate (XMP), so it can be reused for RNA or DNA synthesis. The sequence is that of Xanthine phosphoribosyltransferase from Bacillus mycoides (strain KBAB4) (Bacillus weihenstephanensis).